Consider the following 351-residue polypeptide: DNA polymerase IV (351 aa).

Residues 4–185 (IIHVDMDCFF…LPLGKIPGVG (182 aa)) form the UmuC domain. The Mg(2+) site is built by Asp8 and Asp103. The active site involves Glu104.

It belongs to the DNA polymerase type-Y family. As to quaternary structure, monomer. Mg(2+) serves as cofactor.

The protein localises to the cytoplasm. It catalyses the reaction DNA(n) + a 2'-deoxyribonucleoside 5'-triphosphate = DNA(n+1) + diphosphate. In terms of biological role, poorly processive, error-prone DNA polymerase involved in untargeted mutagenesis. Copies undamaged DNA at stalled replication forks, which arise in vivo from mismatched or misaligned primer ends. These misaligned primers can be extended by PolIV. Exhibits no 3'-5' exonuclease (proofreading) activity. May be involved in translesional synthesis, in conjunction with the beta clamp from PolIII. In Cronobacter sakazakii (strain ATCC BAA-894) (Enterobacter sakazakii), this protein is DNA polymerase IV.